A 2548-amino-acid chain; its full sequence is Variant-silencing SET domain-containing protein (2548 aa).

Residues 37-48 show a composition bias toward acidic residues; it reads IDDDDDDDNDNN. 3 disordered regions span residues 37 to 61, 336 to 379, and 585 to 629; these read IDDD…KTNN, GDPK…DDDN, and SVDR…NTQT. The segment covering 336–357 has biased composition (basic and acidic residues); sequence GDPKKRIERNKQEIEDHRREQD. Positions 358-378 are enriched in acidic residues; the sequence is GENDQEEDNYDDYDDEDDDDD. Over residues 602–616 the composition is skewed to low complexity; sequence NGSNNNNSSSNNNNN. Polar residues predominate over residues 617-629; it reads ITHITNDCDNTQT. The PHD-type 1 zinc-finger motif lies at 787–846; sequence FYLCEFCEQNIFDMNNMIKKDKAKECMYRCNISCGRTFHKACVCYIKNNDNYICFFCLYD. Residues 929–944 show a composition bias toward basic residues; sequence IKRRHIYRKRRRRGPR. Disordered regions lie at residues 929-1054, 1546-1575, 1713-1732, and 1772-1822; these read IKRR…CDEN, EKNT…NTLD, EQGS…NNAK, and INNA…DDHR. A compositionally biased stretch (acidic residues) spans 986-1016; sequence DNNDDNNDNNDDNNDNNDDNNDNNDNNDDNN. Low complexity-rich tracts occupy residues 1017–1050 and 1551–1572; these read NDNN…NNNN and NKLC…TKYN. Positions 1714–1732 are enriched in polar residues; sequence QGSINNAKHNEQGSINNAK. One can recognise an AWS domain in the interval 2067-2117; sequence SDDYKCLCQGECNLYTCYNSLSNIQCSKSRCNLPEKIQDRKCFNRPFRKSF. The SET domain occupies 2119 to 2240; the sequence is KDLEIKKTEK…SGEEITYNYS (122 aa). Tyrosine 2239 contributes to the S-adenosyl-L-methionine binding site. The segment at 2423–2471 adopts a PHD-type 2 zinc-finger fold; the sequence is DEVCRKCKSCGNLTMCDKCFQSYHQLCGNMHSKMYKNNELVLCRFCQKY.

This sequence belongs to the class V-like SAM-binding methyltransferase superfamily.

Its subcellular location is the nucleus. The protein resides in the chromosome. The enzyme catalyses L-lysyl(36)-[histone H3] + 3 S-adenosyl-L-methionine = N(6),N(6),N(6)-trimethyl-L-lysyl(36)-[histone H3] + 3 S-adenosyl-L-homocysteine + 3 H(+). In terms of biological role, histone methyltransferase that specifically represses expression of the surface antigen-coding var genes by mediating trimethylation of 'Lys-36' of histone H3 (H3K36me3) on var genes. SETVS-dependent H3K36me3 is specifically involved in var genes silencing, a central step malaria pathogenesis: each parasite contains 60 distinct var genes that each code for a different PfEMP1 protein. During infection, the clonal parasite population expresses only 1 gene at a time, while the 59 other var genes are silenced. The parasite then switches to the expression of a new variant antigen as an immune-evasion mechanism to avoid the host antibody response. Represses expression of both var mRNA and antisense long non-coding RNA. The chain is Variant-silencing SET domain-containing protein (SETVS) from Plasmodium falciparum (isolate 3D7).